The following is a 356-amino-acid chain: tRNA N6-adenosine threonylcarbamoyltransferase (356 aa).

Residues His-115 and His-119 each coordinate Fe cation. Substrate-binding positions include 138–142, Asp-171, Gly-184, and Asn-283; that span reads LVSGG. Asp-311 is a binding site for Fe cation.

This sequence belongs to the KAE1 / TsaD family. Fe(2+) serves as cofactor.

Its subcellular location is the cytoplasm. It catalyses the reaction L-threonylcarbamoyladenylate + adenosine(37) in tRNA = N(6)-L-threonylcarbamoyladenosine(37) in tRNA + AMP + H(+). In terms of biological role, required for the formation of a threonylcarbamoyl group on adenosine at position 37 (t(6)A37) in tRNAs that read codons beginning with adenine. Is involved in the transfer of the threonylcarbamoyl moiety of threonylcarbamoyl-AMP (TC-AMP) to the N6 group of A37, together with TsaE and TsaB. TsaD likely plays a direct catalytic role in this reaction. This is tRNA N6-adenosine threonylcarbamoyltransferase from Prochlorococcus marinus (strain SARG / CCMP1375 / SS120).